The following is an 872-amino-acid chain: Protein translocase subunit SecA (872 aa).

Residues glutamine 87, 105-109 (GEGKT), and aspartate 510 each bind ATP. Residues cysteine 847, cysteine 849, cysteine 858, and cysteine 859 each coordinate Zn(2+).

It belongs to the SecA family. Monomer and homodimer. Part of the essential Sec protein translocation apparatus which comprises SecA, SecYEG and auxiliary proteins SecDF-YajC and YidC. Zn(2+) is required as a cofactor.

The protein localises to the cell inner membrane. It is found in the cytoplasm. It catalyses the reaction ATP + H2O + cellular proteinSide 1 = ADP + phosphate + cellular proteinSide 2.. Its function is as follows. Part of the Sec protein translocase complex. Interacts with the SecYEG preprotein conducting channel. Has a central role in coupling the hydrolysis of ATP to the transfer of proteins into and across the cell membrane, serving as an ATP-driven molecular motor driving the stepwise translocation of polypeptide chains across the membrane. The polypeptide is Protein translocase subunit SecA (Aliarcobacter butzleri (strain RM4018) (Arcobacter butzleri)).